The sequence spans 636 residues: Threonine--tRNA ligase (636 aa).

The region spanning 1-63 is the TGS domain; that stretch reads MNEINVTLPD…ADGARVEIVT (63 aa). A catalytic region spans residues 243 to 534; it reads DHRKLGRELD…LIEHFAGNFP (292 aa). Zn(2+) contacts are provided by cysteine 335, histidine 386, and histidine 511.

The protein belongs to the class-II aminoacyl-tRNA synthetase family. In terms of assembly, homodimer. Zn(2+) serves as cofactor.

The protein localises to the cytoplasm. The catalysed reaction is tRNA(Thr) + L-threonine + ATP = L-threonyl-tRNA(Thr) + AMP + diphosphate + H(+). Functionally, catalyzes the attachment of threonine to tRNA(Thr) in a two-step reaction: L-threonine is first activated by ATP to form Thr-AMP and then transferred to the acceptor end of tRNA(Thr). Also edits incorrectly charged L-seryl-tRNA(Thr). The sequence is that of Threonine--tRNA ligase from Geobacter sp. (strain M21).